The sequence spans 122 residues: Large ribosomal subunit protein bL19 (122 aa).

This sequence belongs to the bacterial ribosomal protein bL19 family.

Its function is as follows. This protein is located at the 30S-50S ribosomal subunit interface and may play a role in the structure and function of the aminoacyl-tRNA binding site. This Prosthecochloris aestuarii (strain DSM 271 / SK 413) protein is Large ribosomal subunit protein bL19.